Here is a 445-residue protein sequence, read N- to C-terminus: Phosphoglucosamine mutase (445 aa).

Catalysis depends on S102, which acts as the Phosphoserine intermediate. Mg(2+) is bound by residues S102, D241, D243, and D245. S102 is subject to Phosphoserine.

Belongs to the phosphohexose mutase family. Mg(2+) is required as a cofactor. In terms of processing, activated by phosphorylation.

The enzyme catalyses alpha-D-glucosamine 1-phosphate = D-glucosamine 6-phosphate. In terms of biological role, catalyzes the conversion of glucosamine-6-phosphate to glucosamine-1-phosphate. This Photorhabdus laumondii subsp. laumondii (strain DSM 15139 / CIP 105565 / TT01) (Photorhabdus luminescens subsp. laumondii) protein is Phosphoglucosamine mutase.